A 647-amino-acid chain; its full sequence is Macrolide export ATP-binding/permease protein MacB (647 aa).

One can recognise an ABC transporter domain in the interval 6 to 244; that stretch reads LEISGCYRTF…VDTAVTKINN (239 aa). Position 42-49 (42-49) interacts with ATP; the sequence is GASGSGKS. 4 helical membrane passes run 273-293, 522-542, 577-597, and 612-632; these read FLTMLGIIIGIASVVSVVALG, LLISAIAVISLIVGGIGVMNI, LVCLCGGTLGIALAYLIGVVF, and SIVAAFACSTLIGVLFGFLPA.

This sequence belongs to the ABC transporter superfamily. Macrolide exporter (TC 3.A.1.122) family. As to quaternary structure, homodimer. Part of the tripartite efflux system MacAB-TolC, which is composed of an inner membrane transporter, MacB, a periplasmic membrane fusion protein, MacA, and an outer membrane component, TolC. The complex forms a large protein conduit and can translocate molecules across both the inner and outer membranes. Interacts with MacA.

The protein resides in the cell inner membrane. Its function is as follows. Part of the tripartite efflux system MacAB-TolC. MacB is a non-canonical ABC transporter that contains transmembrane domains (TMD), which form a pore in the inner membrane, and an ATP-binding domain (NBD), which is responsible for energy generation. Confers resistance against macrolides. The protein is Macrolide export ATP-binding/permease protein MacB of Shewanella sp. (strain W3-18-1).